We begin with the raw amino-acid sequence, 89 residues long: Small ribosomal subunit protein uS15 (89 aa).

A compositionally biased stretch (polar residues) spans 1–10 (MAVTTDQKSQ). The segment at 1 to 22 (MAVTTDQKSQVMRDYQRAAGDT) is disordered.

This sequence belongs to the universal ribosomal protein uS15 family. As to quaternary structure, part of the 30S ribosomal subunit. Forms a bridge to the 50S subunit in the 70S ribosome, contacting the 23S rRNA.

One of the primary rRNA binding proteins, it binds directly to 16S rRNA where it helps nucleate assembly of the platform of the 30S subunit by binding and bridging several RNA helices of the 16S rRNA. Its function is as follows. Forms an intersubunit bridge (bridge B4) with the 23S rRNA of the 50S subunit in the ribosome. The protein is Small ribosomal subunit protein uS15 of Nitrosomonas europaea (strain ATCC 19718 / CIP 103999 / KCTC 2705 / NBRC 14298).